Here is a 125-residue protein sequence, read N- to C-terminus: Large ribosomal subunit protein bL19 (125 aa).

Belongs to the bacterial ribosomal protein bL19 family.

Functionally, this protein is located at the 30S-50S ribosomal subunit interface and may play a role in the structure and function of the aminoacyl-tRNA binding site. The sequence is that of Large ribosomal subunit protein bL19 from Wolbachia pipientis wMel.